The primary structure comprises 362 residues: Protein RecA (362 aa).

77–84 (GPESSGKT) is an ATP binding site.

The protein belongs to the RecA family.

It is found in the cytoplasm. Can catalyze the hydrolysis of ATP in the presence of single-stranded DNA, the ATP-dependent uptake of single-stranded DNA by duplex DNA, and the ATP-dependent hybridization of homologous single-stranded DNAs. It interacts with LexA causing its activation and leading to its autocatalytic cleavage. This Nitrobacter winogradskyi (strain ATCC 25391 / DSM 10237 / CIP 104748 / NCIMB 11846 / Nb-255) protein is Protein RecA.